Here is a 471-residue protein sequence, read N- to C-terminus: Glutamate--tRNA ligase (471 aa).

A 'HIGH' region motif is present at residues 9–19 (PSPTGYLHVGG). Residues Cys98, Cys100, Cys125, and His127 each contribute to the Zn(2+) site. The 'KMSKS' region signature appears at 237-241 (KLSKR). Residue Lys240 coordinates ATP.

The protein belongs to the class-I aminoacyl-tRNA synthetase family. Glutamate--tRNA ligase type 1 subfamily. In terms of assembly, monomer. The cofactor is Zn(2+).

The protein resides in the cytoplasm. The catalysed reaction is tRNA(Glu) + L-glutamate + ATP = L-glutamyl-tRNA(Glu) + AMP + diphosphate. Functionally, catalyzes the attachment of glutamate to tRNA(Glu) in a two-step reaction: glutamate is first activated by ATP to form Glu-AMP and then transferred to the acceptor end of tRNA(Glu). This is Glutamate--tRNA ligase from Shigella dysenteriae serotype 1 (strain Sd197).